A 236-amino-acid polypeptide reads, in one-letter code: Phosphoribosylformylglycinamidine synthase subunit PurQ (236 aa).

The Glutamine amidotransferase type-1 domain occupies 2–234 (RFAVVTFPGS…LSVGLEVAHS (233 aa)). Catalysis depends on Cys86, which acts as the Nucleophile. Catalysis depends on residues His203 and Glu205.

Part of the FGAM synthase complex composed of 1 PurL, 1 PurQ and 2 PurS subunits.

It is found in the cytoplasm. The catalysed reaction is N(2)-formyl-N(1)-(5-phospho-beta-D-ribosyl)glycinamide + L-glutamine + ATP + H2O = 2-formamido-N(1)-(5-O-phospho-beta-D-ribosyl)acetamidine + L-glutamate + ADP + phosphate + H(+). It catalyses the reaction L-glutamine + H2O = L-glutamate + NH4(+). Its pathway is purine metabolism; IMP biosynthesis via de novo pathway; 5-amino-1-(5-phospho-D-ribosyl)imidazole from N(2)-formyl-N(1)-(5-phospho-D-ribosyl)glycinamide: step 1/2. Its function is as follows. Part of the phosphoribosylformylglycinamidine synthase complex involved in the purines biosynthetic pathway. Catalyzes the ATP-dependent conversion of formylglycinamide ribonucleotide (FGAR) and glutamine to yield formylglycinamidine ribonucleotide (FGAM) and glutamate. The FGAM synthase complex is composed of three subunits. PurQ produces an ammonia molecule by converting glutamine to glutamate. PurL transfers the ammonia molecule to FGAR to form FGAM in an ATP-dependent manner. PurS interacts with PurQ and PurL and is thought to assist in the transfer of the ammonia molecule from PurQ to PurL. The chain is Phosphoribosylformylglycinamidine synthase subunit PurQ from Thermomicrobium roseum (strain ATCC 27502 / DSM 5159 / P-2).